Reading from the N-terminus, the 114-residue chain is UPF0339 protein PM0519 (114 aa).

2 consecutive repeat copies span residues 11–59 and 62–110.

The protein belongs to the UPF0339 family. Duplicated subfamily.

The chain is UPF0339 protein PM0519 from Pasteurella multocida (strain Pm70).